Here is an 880-residue protein sequence, read N- to C-terminus: MTLLTSSLLFFSLLTSRLEAIPVLEKSPAHPAHSAHPAHPSHPSPGVRILRAPESLVAPLGDEVVLECETSLQPERFEWSHRSSRSSGAGFKYLRTGTAKANVSQEAAISRLKVLVRQDTLGEYRCVGWFGPLVVTSTIARLELASTSLLGGQESESPLQWRVSAGNSVLWPCGKQVKSNPSASWSYYRNGVEIKPEFIGTNGNIFLSNVSSESSGSYSCQATNPASGERIQLTGSLQLQVTPEQRSQSKSPHLLNGQPNSQEITIREGSSLLLLCPGVGSPPPTVVWSSPDVVGAVKNKRSKVIGHALEISNTRVQDAGTYICFQDNGVRPVLEHYIKVHVEQPPQIVRPPWADLTNEGDRLKLECEATGVPTPEIYWLLNGHSSLDDTEAELSNNFLILHSVLKRHAGYVQCFARNRLGEHSAGTLLQVNPKQIQEPRESGGTHRPKPNQGSKQKQMYPPTPPNVTRLSDESVMLRWMVPRNDGLPIVIFKVQYRMVGKRKNWQTTNDNIPYGKPKWNSELGKSFTASVTDLKPQHTYRFRILAVYSNNDNKESNTSAKFYLQPGAALDPMPVPELLEIEEYSETAVVLHWSLASDADEHLITGYYAYYRPSSSAGEYFKATIEGAHARSFKIAPLETATMYEFKLQSFSAVSASEFSALKQGRTQRPKTSTTEEPTLQMGDRDTTTPSHNETFNMSPMLTGTIGGGAVLILLLISTCLCVCRRRSSRSRGNNPNKPRMAELRDDFVPLGNCSPTKQRQRTRHIHITLNPLAQQQQQALEEKNDTDQDAPYYQRPSSYDYDPGLRRMSSSSLRRSQRTLERAGGSNGSNNGNNNNLNQSAEAGPVENPGKPGRVLMKRPRLSSRSENLSSGSLNSVGV.

The first 20 residues, 1-20 (MTLLTSSLLFFSLLTSRLEA), serve as a signal peptide directing secretion. At 21–703 (IPVLEKSPAH…ETFNMSPMLT (683 aa)) the chain is on the extracellular side. 4 consecutive Ig-like C2-type domains span residues 45–142 (PGVR…IARL), 132–234 (PLVV…IQLT), 252–340 (PHLL…YIKV), and 346–432 (PQIV…LQVN). 4 cysteine pairs are disulfide-bonded: Cys68–Cys126, Cys173–Cys220, Cys276–Cys324, and Cys367–Cys414. 2 N-linked (GlcNAc...) asparagine glycosylation sites follow: Asn102 and Asn209. Positions 426 to 467 (GTLLQVNPKQIQEPRESGGTHRPKPNQGSKQKQMYPPTPPNV) are disordered. 2 consecutive Fibronectin type-III domains span residues 461-567 (PPTP…LQPG) and 575-670 (VPEL…TQRP). A glycan (N-linked (GlcNAc...) asparagine) is linked at Asn466. Heparin contacts are provided by Arg497, Lys501, Lys503, and Arg541. Asn557 is a glycosylation site (N-linked (GlcNAc...) asparagine). The segment at 662-697 (LKQGRTQRPKTSTTEEPTLQMGDRDTTTPSHNETFN) is disordered. Composition is skewed to polar residues over residues 665-678 (GRTQRPKTSTTEEP) and 688-697 (TTPSHNETFN). An N-linked (GlcNAc...) asparagine glycan is attached at Asn693. Residues 704-724 (GTIGGGAVLILLLISTCLCVC) form a helical membrane-spanning segment. Over 725–880 (RRRSSRSRGN…SSGSLNSVGV (156 aa)) the chain is Cytoplasmic. 2 disordered regions span residues 728-762 (SSRSRGNNPNKPRMAELRDDFVPLGNCSPTKQRQR) and 775-880 (QQQQ…SVGV). Low complexity-rich tracts occupy residues 823–837 (RAGGSNGSNNGNNNN) and 864–880 (SSRSENLSSGSLNSVGV).

This sequence belongs to the immunoglobulin superfamily. IHOG family. As to quaternary structure, homodimer. Heterotetramer; 2 iHog chains bind 2 hh chains when facilitated by heparin, heparin is required to promote high-affinity interactions between hh and iHog.

The protein localises to the membrane. In terms of biological role, mediates response to the active Hedgehog (Hh) protein signal in embryos, functioning upstream or at the level of patched (ptc). This chain is Interference hedgehog, found in Drosophila yakuba (Fruit fly).